The sequence spans 296 residues: Phosphatidylserine decarboxylase proenzyme (296 aa).

Residues Asp-92, His-149, and Ser-251 each act as charge relay system; for autoendoproteolytic cleavage activity in the active site. Residue Ser-251 is the Schiff-base intermediate with substrate; via pyruvic acid; for decarboxylase activity of the active site. The residue at position 251 (Ser-251) is a Pyruvic acid (Ser); by autocatalysis.

Belongs to the phosphatidylserine decarboxylase family. PSD-B subfamily. Prokaryotic type I sub-subfamily. Heterodimer of a large membrane-associated beta subunit and a small pyruvoyl-containing alpha subunit. The cofactor is pyruvate. Is synthesized initially as an inactive proenzyme. Formation of the active enzyme involves a self-maturation process in which the active site pyruvoyl group is generated from an internal serine residue via an autocatalytic post-translational modification. Two non-identical subunits are generated from the proenzyme in this reaction, and the pyruvate is formed at the N-terminus of the alpha chain, which is derived from the carboxyl end of the proenzyme. The autoendoproteolytic cleavage occurs by a canonical serine protease mechanism, in which the side chain hydroxyl group of the serine supplies its oxygen atom to form the C-terminus of the beta chain, while the remainder of the serine residue undergoes an oxidative deamination to produce ammonia and the pyruvoyl prosthetic group on the alpha chain. During this reaction, the Ser that is part of the protease active site of the proenzyme becomes the pyruvoyl prosthetic group, which constitutes an essential element of the active site of the mature decarboxylase.

The protein localises to the cell membrane. The enzyme catalyses a 1,2-diacyl-sn-glycero-3-phospho-L-serine + H(+) = a 1,2-diacyl-sn-glycero-3-phosphoethanolamine + CO2. The protein operates within phospholipid metabolism; phosphatidylethanolamine biosynthesis; phosphatidylethanolamine from CDP-diacylglycerol: step 2/2. Functionally, catalyzes the formation of phosphatidylethanolamine (PtdEtn) from phosphatidylserine (PtdSer). This is Phosphatidylserine decarboxylase proenzyme from Hahella chejuensis (strain KCTC 2396).